Here is an 877-residue protein sequence, read N- to C-terminus: Probable alpha/beta-glucosidase agdC (877 aa).

An N-terminal signal peptide occupies residues Met-1–Ala-14. 3 N-linked (GlcNAc...) asparagine glycosylation sites follow: Asn-171, Asn-293, and Asn-373. Catalysis depends on Asp-422, which acts as the Nucleophile. Glu-425 is an active-site residue. The interval Asp-432–Ser-476 is disordered. The segment covering Pro-447–Gly-463 has biased composition (pro residues). Asn-508 is a glycosylation site (N-linked (GlcNAc...) asparagine). Asp-573 (proton donor) is an active-site residue. Asn-574, Asn-610, and Asn-744 each carry an N-linked (GlcNAc...) asparagine glycan.

It belongs to the glycosyl hydrolase 31 family.

It localises to the secreted. The catalysed reaction is Hydrolysis of terminal, non-reducing (1-&gt;4)-linked alpha-D-glucose residues with release of alpha-D-glucose.. It carries out the reaction Hydrolysis of terminal, non-reducing beta-D-glucosyl residues with release of beta-D-glucose.. Functionally, glucosidase involved in the degradation of cellulosic biomass. Has both alpha- and beta-glucosidase activity. The polypeptide is Probable alpha/beta-glucosidase agdC (agdC) (Aspergillus flavus (strain ATCC 200026 / FGSC A1120 / IAM 13836 / NRRL 3357 / JCM 12722 / SRRC 167)).